We begin with the raw amino-acid sequence, 306 residues long: UDP-3-O-acyl-N-acetylglucosamine deacetylase (306 aa).

Residues H79, H238, and D242 each contribute to the Zn(2+) site. The Proton donor role is filled by H265.

The protein belongs to the LpxC family. The cofactor is Zn(2+).

The enzyme catalyses a UDP-3-O-[(3R)-3-hydroxyacyl]-N-acetyl-alpha-D-glucosamine + H2O = a UDP-3-O-[(3R)-3-hydroxyacyl]-alpha-D-glucosamine + acetate. Its pathway is glycolipid biosynthesis; lipid IV(A) biosynthesis; lipid IV(A) from (3R)-3-hydroxytetradecanoyl-[acyl-carrier-protein] and UDP-N-acetyl-alpha-D-glucosamine: step 2/6. Functionally, catalyzes the hydrolysis of UDP-3-O-myristoyl-N-acetylglucosamine to form UDP-3-O-myristoylglucosamine and acetate, the committed step in lipid A biosynthesis. This Shewanella halifaxensis (strain HAW-EB4) protein is UDP-3-O-acyl-N-acetylglucosamine deacetylase.